The chain runs to 888 residues: Extra-large guanine nucleotide-binding protein 1 (888 aa).

Residues Ser98–Leu119 are disordered. Residues Thr103–Glu118 are compositionally biased toward acidic residues. A Nuclear localization signal motif is present at residues Arg205–Lys222. The segment at Cys225–Cys268 adopts an RING-type; degenerate zinc-finger fold. In terms of domain architecture, G-alpha spans Thr482 to Tyr879. Residues Lys485–Thr498 form a G1 motif region. Residues Gly490 to Thr498 and Asp661 to Thr669 each bind GTP. Positions 497 and 669 each coordinate Ca(2+). Residues Asp661–Thr669 are G2 motif. Residues Tyr702–Gly711 form a G3 motif region. The tract at residues Leu770–Asp777 is G4 motif. Residue Asn774–Asp777 participates in GTP binding. Positions Ser843 to Pro848 are G5 motif.

Belongs to the G-alpha family. XLG subfamily. Ca(2+) is required as a cofactor. Ubiquitous. Strongly expressed in vascular tissues, root and shoot meristems and lateral root primordia.

The protein resides in the nucleus. Functionally, guanine nucleotide-binding proteins (G proteins) are involved as modulators or transducers in various transmembrane signaling systems. Binds GTP with specificity. Plays a role in the root morphogenesis by regulation of the cell proliferation. The polypeptide is Extra-large guanine nucleotide-binding protein 1 (XLG1) (Arabidopsis thaliana (Mouse-ear cress)).